Consider the following 478-residue polypeptide: Succinyl-CoA:acetate/propanoyl-CoA:succinate CoA transferase (478 aa).

A mitochondrion-targeting transit peptide spans 1-30; sequence MYQLAFLRCRYASPIVREARRAFHASRKCQ. Position 256-260 (256-260) interacts with CoA; that stretch reads GIGAI. The active-site 5-glutamyl coenzyme A thioester intermediate is glutamate 279. CoA is bound by residues isoleucine 354, glycine 377, and lysine 404.

This sequence belongs to the acetyl-CoA hydrolase/transferase family.

Its subcellular location is the mitochondrion. It carries out the reaction succinyl-CoA + acetate = succinate + acetyl-CoA. It catalyses the reaction propanoyl-CoA + succinate = propanoate + succinyl-CoA. Functionally, transferase involved in anaerobic fumarate-respiration in the mitochondria. Catalyzes the transfer of the CoA moiety of acetyl-CoA or propionyl-CoA to succinate, thereby forming acetate and propionate, respectively. Acetate and propionate are the two major metabolic end products in the anaerobic mitochondrial metabolism of F.hepatica. Also displays CoA transferase activities from acetyl-CoA to propionate, acetate and butyrate. The protein is Succinyl-CoA:acetate/propanoyl-CoA:succinate CoA transferase of Fasciola hepatica (Liver fluke).